The primary structure comprises 173 residues: RNA pyrophosphohydrolase (173 aa).

The region spanning 11–164 (PYRKCVGIVV…KKHVYMKVVS (154 aa)) is the Nudix hydrolase domain. The Nudix box signature appears at 52–73 (GGIDEDEKPLDAAYRELYEETG).

It belongs to the Nudix hydrolase family. RppH subfamily. A divalent metal cation is required as a cofactor.

Its function is as follows. Accelerates the degradation of transcripts by removing pyrophosphate from the 5'-end of triphosphorylated RNA, leading to a more labile monophosphorylated state that can stimulate subsequent ribonuclease cleavage. The chain is RNA pyrophosphohydrolase from Bartonella tribocorum (strain CIP 105476 / IBS 506).